A 150-amino-acid chain; its full sequence is Cytochrome c-type biogenesis protein CcmE (150 aa).

The Cytoplasmic portion of the chain corresponds to 1–7 (MTRKQKR). Residues 8–28 (LAIIGGGVGFLTAAVLLVMFA) form a helical; Signal-anchor for type II membrane protein membrane-spanning segment. Topologically, residues 29-150 (FSQAVAYFYV…VTLGGEENIR (122 aa)) are periplasmic. The heme site is built by His123 and Tyr127.

The protein belongs to the CcmE/CycJ family.

The protein localises to the cell inner membrane. Functionally, heme chaperone required for the biogenesis of c-type cytochromes. Transiently binds heme delivered by CcmC and transfers the heme to apo-cytochromes in a process facilitated by CcmF and CcmH. The sequence is that of Cytochrome c-type biogenesis protein CcmE from Sinorhizobium medicae (strain WSM419) (Ensifer medicae).